We begin with the raw amino-acid sequence, 1788 residues long: U3 small nucleolar RNA-associated protein 10 (1788 aa).

Residues 585-622 (LDFQAVVPYAIVALSDPAKKVRRAAAELVTVLGSFYET) form an HEAT 1 repeat. The segment at 884–905 (PATKRRRVGSSEKSVDSQSPAD) is disordered. HEAT repeat units lie at residues 926 to 962 (AKHPELLPSLFTTLSELQHLRTVVGSELGYLQSLVLS), 1049 to 1086 (QTVKEVIPPLIETFRKSRRNLVASTAELLTSFVVAYEH), 1257 to 1294 (LSIAEFIKSVEALLDRPNVILRQKVLRALERRVDSESI), 1301 to 1339 (EALLAFLPQLTAVIRESDDMNYKHTAVNCVDKIAEKYGK), 1703 to 1740 (EHHKEINSALLKHLRSEQAAVRLAVIKCEQELTARLGE), and 1744 to 1781 (QSLPEMLPFISELQDDDDEVVERENRRWIVGIEETLGE).

This sequence belongs to the HEATR1/UTP10 family. As to quaternary structure, component of the ribosomal small subunit (SSU) processome.

The protein localises to the nucleus. Its subcellular location is the nucleolus. Involved in nucleolar processing of pre-18S ribosomal RNA. Involved in ribosome biosynthesis. This is U3 small nucleolar RNA-associated protein 10 (rbg-5) from Neurospora crassa (strain ATCC 24698 / 74-OR23-1A / CBS 708.71 / DSM 1257 / FGSC 987).